Reading from the N-terminus, the 488-residue chain is ATP synthase subunit beta (488 aa).

Gly164 to Thr171 serves as a coordination point for ATP.

It belongs to the ATPase alpha/beta chains family. As to quaternary structure, F-type ATPases have 2 components, CF(1) - the catalytic core - and CF(0) - the membrane proton channel. CF(1) has five subunits: alpha(3), beta(3), gamma(1), delta(1), epsilon(1). CF(0) has four main subunits: a(1), b(1), b'(1) and c(9-12).

Its subcellular location is the cellular thylakoid membrane. It carries out the reaction ATP + H2O + 4 H(+)(in) = ADP + phosphate + 5 H(+)(out). Produces ATP from ADP in the presence of a proton gradient across the membrane. The catalytic sites are hosted primarily by the beta subunits. In Prochlorococcus marinus (strain NATL2A), this protein is ATP synthase subunit beta.